A 231-amino-acid polypeptide reads, in one-letter code: Nitrate reductase [NAD(P)H] (231 aa).

The region spanning 1-85 is the FAD-binding FR-type domain; sequence PQKLGLPVGR…KGPHRHIEYT (85 aa). FAD is bound by residues 25–28, 42–46, F47, 59–61, and T112; these read RAYT, LIKIY, and LMS.

Belongs to the nitrate reductase family. Homodimer. The cofactor is FAD. Heme serves as cofactor. Mo-molybdopterin is required as a cofactor.

The enzyme catalyses nitrite + NAD(+) + H2O = nitrate + NADH + H(+). It carries out the reaction nitrite + NADP(+) + H2O = nitrate + NADPH + H(+). In terms of biological role, nitrate reductase is a key enzyme involved in the first step of nitrate assimilation in plants, fungi and bacteria. In Zea mays (Maize), this protein is Nitrate reductase [NAD(P)H] (NAR).